The sequence spans 720 residues: Zinc finger protein 408 (720 aa).

Positions 201 to 350 (VQQEVASPGE…GPAGSSPKQG (150 aa)) are disordered. Residues 275–285 (LQSNSATQQDP) show a composition bias toward polar residues. Residues 287–296 (GSGASFSSSA) are compositionally biased toward low complexity. Threonine 322 carries the post-translational modification Phosphothreonine. C2H2-type zinc fingers lie at residues 353–375 (YRCG…AFVH), 381–403 (FLCT…MLGH), 409–431 (FPCP…QVVH), 437–459 (FACD…RKTH), 468–490 (CPCP…MRLH), 496–518 (FLCP…LRLH), 524–546 (YRCP…LISH), 551–573 (HLCP…ERLH), 579–601 (FPCP…LKSH), and 607–629 (YRCP…QLSH).

Highest expression is observed in adult retina; abundantly expressed in the fetal eye. In the retina, it is detected in the outer nuclear layer, especially cone and rod photoreceptor cells, ganglion cell layer and both outer and inner plexiform layers (at protein level). Expressed in retinal blood vessels (at protein level).

It is found in the nucleus. In terms of biological role, may be involved in transcriptional regulation. The sequence is that of Zinc finger protein 408 (ZNF408) from Homo sapiens (Human).